Reading from the N-terminus, the 443-residue chain is Spermidine hydroxycinnamoyltransferase 1 (443 aa).

Residues His167 and Asp390 each act as proton acceptor in the active site.

This sequence belongs to the plant acyltransferase family.

Its function is as follows. Hydroxycinnamoyl transferase that catalyzes the transfer of an acyl from p-coumaryol-CoA to spermidine, to produce coumaroyl spermidine. Can use feruloyl-CoA as acyl donor. Contributes to the natural variation of spermidine-based phenolamides in rice cultivars. In Oryza sativa subsp. japonica (Rice), this protein is Spermidine hydroxycinnamoyltransferase 1.